The following is a 178-amino-acid chain: Caveolin-1 (178 aa).

At Ser2 the chain carries N-acetylserine. A Phosphoserine modification is found at Ser2. Residues Ser2–Val94 are required for homooligomerization. Topologically, residues Ser2–Ser104 are cytoplasmic. Residue Lys5 is modified to N6-acetyllysine; alternate. A Glycyl lysine isopeptide (Lys-Gly) (interchain with G-Cter in ubiquitin); alternate cross-link involves residue Lys5. Position 6 is a phosphotyrosine (Tyr6). A Phosphoserine modification is found at Ser9. Tyr14 carries the phosphotyrosine; by ABL1 modification. At Tyr25 the chain carries Phosphotyrosine. Glycyl lysine isopeptide (Lys-Gly) (interchain with G-Cter in ubiquitin) cross-links involve residues Lys26, Lys30, Lys39, Lys47, and Lys57. The tract at residues Asp82–Val94 is interaction with CAVIN3. Residues Ala105–Leu125 constitute an intramembrane region (helical). Topologically, residues His126–Ile178 are cytoplasmic. The tract at residues Val131–Gln142 is interacts with SPRY1, SPRY2, SPRY3 and SPRY4. Residues Cys133, Cys143, and Cys156 are each lipidated (S-palmitoyl cysteine). The segment at Ser149–Phe160 is interacts with SPRY1, SPRY2, and SPRY4. Residues Phe167–Ile178 form an interacts with SPRY1, SPRY2, SPRY3 and SPRY4 region.

The protein belongs to the caveolin family. In terms of assembly, homooligomer. Interacts with GLIPR2. Interacts with NOSTRIN. Interacts with SNAP25 and STX1A. Interacts (via the N-terminus) with DPP4; the interaction is direct. Interacts with CTNNB1, CDH1 and JUP. Interacts with PACSIN2; this interaction induces membrane tubulation. Interacts with SLC7A9. Interacts with BMX and BTK. Interacts with TGFBR1. Interacts with CAVIN3 (via leucine-zipper domain) in a cholesterol-sensitive manner. Interacts with CAVIN1. Interacts with EHD2 in a cholesterol-dependent manner. Forms a ternary complex with UBXN6 and VCP; mediates CAV1 targeting to lysosomes for degradation. Interacts with ABCG1; this interaction regulates ABCG1-mediated cholesterol efflux. Interacts with NEU3; this interaction enhances NEU3 sialidase activity within caveola. Interacts (via C-terminus) with SPRY1, SPRY2 (via C-terminus), SPRY3, and SPRY4. Interacts with IGFBP5; this interaction allows trafficking of IGFBP5 from the plasma membrane to the nucleus. Post-translationally, phosphorylated at Tyr-14 by ABL1 in response to oxidative stress. Ubiquitinated. Undergo monoubiquitination and multi- and/or polyubiquitination. Monoubiquitination of N-terminal lysines promotes integration in a ternary complex with UBXN6 and VCP which promotes oligomeric CAV1 targeting to lysosomes for degradation. Ubiquitinated by ZNRF1; leading to degradation and modulation of the TLR4-mediated immune response.

The protein localises to the golgi apparatus membrane. Its subcellular location is the cell membrane. It localises to the membrane. It is found in the caveola. The protein resides in the membrane raft. May act as a scaffolding protein within caveolar membranes. Forms a stable heterooligomeric complex with CAV2 that targets to lipid rafts and drives caveolae formation. Mediates the recruitment of CAVIN proteins (CAVIN1/2/3/4) to the caveolae. Interacts directly with G-protein alpha subunits and can functionally regulate their activity. Involved in the costimulatory signal essential for T-cell receptor (TCR)-mediated T-cell activation. Its binding to DPP4 induces T-cell proliferation and NF-kappa-B activation in a T-cell receptor/CD3-dependent manner. Recruits CTNNB1 to caveolar membranes and may regulate CTNNB1-mediated signaling through the Wnt pathway. Negatively regulates TGFB1-mediated activation of SMAD2/3 by mediating the internalization of TGFBR1 from membrane rafts leading to its subsequent degradation. Binds 20(S)-hydroxycholesterol (20(S)-OHC). This chain is Caveolin-1 (CAV1), found in Muntiacus reevesi (Reeves' muntjac).